The following is a 101-amino-acid chain: Putative metal transport protein HQ_3622A (101 aa).

Positions Met1–Thr32 are cleaved as a signal peptide. A helical membrane pass occupies residues Ile75–Ala95.

The protein resides in the cell membrane. Functionally, may be involved in metal transport. The sequence is that of Putative metal transport protein HQ_3622A from Haloquadratum walsbyi (strain DSM 16790 / HBSQ001).